Here is a 564-residue protein sequence, read N- to C-terminus: MFS-type transporter grgE (564 aa).

Basic and acidic residues predominate over residues M1–R10. Positions M1 to A52 are disordered. N37 is a glycosylation site (N-linked (GlcNAc...) asparagine). 7 helical membrane passes run H60–L80, K101–T118, T131–P151, A161–S181, G192–F212, W220–F240, and L262–G282. Residue N289 is glycosylated (N-linked (GlcNAc...) asparagine). 7 helical membrane passes run V293–Y313, A329–Y349, V368–V388, G392–I412, I425–I445, I462–V482, and T531–W551.

This sequence belongs to the major facilitator superfamily.

The protein localises to the membrane. Functionally, MFS-type transporter; part of the gene cluster that mediates the biosynthesis of gregatin A, a fungal polyketide featuring an alkylated furanone core. This Penicillium sp protein is MFS-type transporter grgE.